The following is a 541-amino-acid chain: Putative asparagine synthetase [glutamine-hydrolyzing] 1 (541 aa).

Residue Cys-2 is the For GATase activity of the active site. The region spanning 2 to 213 is the Glutamine amidotransferase type-2 domain; the sequence is CSISGIIVKD…PNSQLIYYLD (212 aa). Residues 68–72, 92–94, and Asp-116 each bind L-glutamine; these read RLAIV and NGE. Residues Val-289 and 363-364 each bind ATP; that span reads SG.

Belongs to the asparagine synthetase family.

It catalyses the reaction L-aspartate + L-glutamine + ATP + H2O = L-asparagine + L-glutamate + AMP + diphosphate + H(+). Its pathway is amino-acid biosynthesis; L-asparagine biosynthesis; L-asparagine from L-aspartate (L-Gln route): step 1/1. The chain is Putative asparagine synthetase [glutamine-hydrolyzing] 1 from Methanocaldococcus jannaschii (strain ATCC 43067 / DSM 2661 / JAL-1 / JCM 10045 / NBRC 100440) (Methanococcus jannaschii).